A 1427-amino-acid polypeptide reads, in one-letter code: MTSTKEIKQLQKAKSKAQSSNNLKEEASLCNQLGEVYAKTGDYQAAIEEHRQELALSEILHDVIGSAVANRKIGECYAELGNIEAALKHQRLHLNLARSVHDAAEEQRALATIGRTYLFLFDSDQSANSLKHAEDAFKRSLAIVDERLEGTVSPREISEMKARLLLNLGCVYDGMKEPQRCSDLIRQSIYIAEKNNLLEDLYRANFNLGSIHFRNGQHSRAMRCFEQSKECARKMKDKFSESECFHSIGKILLHLGDFSAARRSLKKAFCLGSQQPSDREAVKKDFRHAIRGCQLEQTAAEVTQKFSHEALDLSEQLGDLYCKVGCYSKALEAYQTQLACAEALAKPARELAVIHVSLAATYTDLRQHHRAVEHYRQELQLRKGNPKEECETWLNMAVCQEEMCQSMETLDHCFTSALNCAEKSGLNKLQRRVLRVWLQAQRRCGSSQCDDTEARLMELCERDGLSLDQSEDEDEEDEVDNSEPLEDSDIQYSESDDEDLEGYDKMVTGRRKTQRWNRRNEKGETVLHRACIEGNLKQVQYLIEQGHPVNVRDYCGWTPLHESCNYGHQEIVAFLLDRGANVNDPGGRECGGITPLHDTLSCGHFSVARLLVLRGASVTVRNSKGHTPLDTLRQWFKTYSGQLDPETKQECLETEKLIKRALSGDVSVVCAAPRQQKELQDSQLFDAEYSEPLLRESPPSPPPITRPAATVPTSKDSAPKHRSTSASTRRPRGMEVDVLYGDDSSSSDNPDSDCSLSPLRPVRSRPRSPPAQSPQEVPSSQELPSVYGIKETTVPPQSESGRLEYQKAMQNLGSAKSRLFSQSLSDPAFTSTPAVSANSRAALVPEDQYLADDWLEDDLIDMQPKKKRRVSEHNATRETTSRSQNNSSTIAEVPPRVQSCSSRGSLSLKKGSNKPRQVKMNQLPGMVMLGRREVSRSQSPIMTQESDHIQEPAPPSHQAMPPASFQNRAAHVPAPIRMRVKVQDNVFLIPVPHSEADSCTVAWLCDQAAQRYYQMCGLLPRLSLQKEGALLLPTDPLLAVLHTNEEVLAEVCSWDLPPLPERYRKACESLGVEENRRVSRVCEVQDSSSCVSVCGLSLSPASLNPLLRALKLQASLTELRISANRLNDELLPEMMAAAATMPRLRVLDISANQITGEGLRKASDAFETRSQAAFPCLEELNLSMNPLGDGWTQALASLLSSCPLLSSLSLQACGLSARFLQQHRLLLANAMASTGNMRSVCLSHNALGSTGFELVLKTLPMHCLTHLELSAVCRGPSDQPSMEILTKLLAQGDCPLTHLNLSGNGLTDHSVLLLARCLPVCPSLVSLDLSANPLVTSTGLHSLLNGLVEARRPLGHLNLQGCQVSGPLAEDCLDSLSDHIRDLRLCSQSLNKLDQDALQQSWKRRTEAVHIFSRNSKCMLSISSPSH.

Residues 1-21 (MTSTKEIKQLQKAKSKAQSSN) are disordered. The span at 10–21 (LQKAKSKAQSSN) shows a compositional bias: low complexity. TPR repeat units lie at residues 27 to 60 (ASLC…SEIL), 67 to 100 (AVAN…ARSV), 107 to 147 (QRAL…VDER), 162 to 195 (ARLL…AEKN), 202 to 235 (YRAN…ARKM), 242 to 275 (SECF…GSQQ), 311 to 344 (LDLS…AEAL), and 352 to 385 (AVIH…RKGN). The interval 465-502 (LSLDQSEDEDEEDEVDNSEPLEDSDIQYSESDDEDLEG) is disordered. Acidic residues predominate over residues 469-501 (QSEDEDEEDEVDNSEPLEDSDIQYSESDDEDLE). 3 ANK repeats span residues 522–551 (KGET…PVNV), 555–584 (CGWT…NVND), and 591–620 (GGIT…SVTV). 3 disordered regions span residues 692 to 801 (PLLR…SESG), 865 to 922 (KKKR…KMNQ), and 941 to 961 (IMTQ…QAMP). Over residues 742-761 (DDSSSSDNPDSDCSLSPLRP) the composition is skewed to low complexity. Residues 773–783 (SPQEVPSSQEL) show a composition bias toward polar residues. Positions 871–880 (SEHNATRETT) are enriched in basic and acidic residues. Residues 881 to 890 (SRSQNNSSTI) show a composition bias toward polar residues. Low complexity predominate over residues 899 to 910 (SCSSRGSLSLKK). LRR repeat units lie at residues 1113–1137 (QASL…MMAA), 1141–1168 (MPRL…AFET), 1174–1197 (FPCL…ALAS), 1234–1258 (TGNM…VLKT), 1293–1316 (DCPL…LLAR), 1321–1346 (CPSL…LLNG), and 1377–1400 (SDHI…ALQQ).

It belongs to the Tonsoku family. In terms of assembly, component of the MMS22L-TONSL complex. Binds histones, with a strong preference for histone H3.1 (histones H3.1 and H3-4/H3.1t).

The protein localises to the nucleus. It localises to the chromosome. The protein resides in the cytoplasm. Functionally, component of the MMS22L-TONSL complex, a complex that promotes homologous recombination-mediated repair of double-strand breaks (DSBs) at stalled or collapsed replication forks. The MMS22L-TONSL complex is required to maintain genome integrity during DNA replication. It mediates the assembly of RAD51 filaments on single-stranded DNA (ssDNA): the MMS22L-TONSL complex is recruited to DSBs following histone replacement by histone chaperones and eviction of the replication protein A complex (RPA/RP-A) from DSBs. Following recruitment to DSBs, the TONSL-MMS22L complex promotes recruitment of RAD51 filaments and subsequent homologous recombination. Within the complex, TONSL acts as a histone reader, which recognizes and binds newly synthesized histones following their replacement by histone chaperones. The protein is Tonsoku-like protein (tonsl) of Danio rerio (Zebrafish).